Here is a 348-residue protein sequence, read N- to C-terminus: N-formyl peptide receptor 2 (348 aa).

N1 carries N-linked (GlcNAc...) asparagine glycosylation. At N1–I24 the chain is on the extracellular side. Residues L25–V47 traverse the membrane as a helical segment. The Cytoplasmic portion of the chain corresponds to A48 to T58. The chain crosses the membrane as a helical span at residues I59–V80. Residues S81–L97 lie on the Extracellular side of the membrane. Cysteines 95 and 173 form a disulfide. The chain crosses the membrane as a helical span at residues I98 to L118. At D119–S137 the chain is on the cytoplasmic side. Residues L138 to L159 traverse the membrane as a helical segment. The Extracellular portion of the chain corresponds to F160–R202. Residues F203–A223 traverse the membrane as a helical segment. Residues K224–V239 lie on the Cytoplasmic side of the membrane. The chain crosses the membrane as a helical span at residues L240–V263. Residues W264 to P283 lie on the Extracellular side of the membrane. A helical membrane pass occupies residues T284–G303. Residues Q304–M348 lie on the Cytoplasmic side of the membrane. A disordered region spans residues S323–M348.

This sequence belongs to the G-protein coupled receptor 1 family. As to quaternary structure, interacts with APP; the interaction takes place at the cell surface and the complex is then rapidly internalized.

It is found in the cell membrane. Low affinity receptor for N-formyl-methionyl peptides, which are powerful neutrophil chemotactic factors. Binding of FMLP to the receptor causes activation of neutrophils. This response is mediated via a G-protein that activates a phosphatidylinositol-calcium second messenger system. Receptor for the chemokine-like protein FAM19A5, mediating FAM19A5-stimulated macrophage chemotaxis and the inhibitory effect on TNFSF11/RANKL-induced osteoclast differentiation. The chain is N-formyl peptide receptor 2 (FPR2) from Pongo pygmaeus (Bornean orangutan).